A 370-amino-acid chain; its full sequence is 3-isopropylmalate dehydrogenase (370 aa).

Position 77 to 90 (77 to 90 (GPKWDAVPYDARPE)) interacts with NAD(+). The substrate site is built by Arg-97, Arg-107, Arg-135, and Asp-226. Residues Asp-226, Asp-250, and Asp-254 each coordinate Mg(2+). 290–302 (GSAPDIAGKGLAN) provides a ligand contact to NAD(+).

This sequence belongs to the isocitrate and isopropylmalate dehydrogenases family. LeuB type 1 subfamily. Homodimer. Mg(2+) is required as a cofactor. The cofactor is Mn(2+).

The protein resides in the cytoplasm. It carries out the reaction (2R,3S)-3-isopropylmalate + NAD(+) = 4-methyl-2-oxopentanoate + CO2 + NADH. The protein operates within amino-acid biosynthesis; L-leucine biosynthesis; L-leucine from 3-methyl-2-oxobutanoate: step 3/4. Catalyzes the oxidation of 3-carboxy-2-hydroxy-4-methylpentanoate (3-isopropylmalate) to 3-carboxy-4-methyl-2-oxopentanoate. The product decarboxylates to 4-methyl-2 oxopentanoate. The chain is 3-isopropylmalate dehydrogenase from Rhodopseudomonas palustris (strain HaA2).